The primary structure comprises 514 residues: CENP-B homolog protein 2 (514 aa).

The HTH CENPB-type domain occupies 70 to 145; that stretch reads QIRRNRQGKY…KKRCLKHGLK (76 aa). One can recognise a DDE-1 domain in the interval 172–384; sequence FDPKDIFNMD…FEPSIIYNCF (213 aa).

Its subcellular location is the nucleus. It localises to the chromosome. The protein localises to the centromere. In terms of biological role, binds to the central core and core-associated repeat regions of centromeric heterochromatin. In Schizosaccharomyces pombe (strain 972 / ATCC 24843) (Fission yeast), this protein is CENP-B homolog protein 2 (cbh2).